Reading from the N-terminus, the 307-residue chain is Nucleotide-binding protein Achl_1824 (307 aa).

Residue 30–37 (GMSGAGRS) coordinates ATP. 81 to 84 (DVRS) lines the GTP pocket.

Belongs to the RapZ-like family.

Its function is as follows. Displays ATPase and GTPase activities. The polypeptide is Nucleotide-binding protein Achl_1824 (Pseudarthrobacter chlorophenolicus (strain ATCC 700700 / DSM 12829 / CIP 107037 / JCM 12360 / KCTC 9906 / NCIMB 13794 / A6) (Arthrobacter chlorophenolicus)).